Here is a 1213-residue protein sequence, read N- to C-terminus: Oligopeptidase PhomG' (1213 aa).

Histidine 447 is a binding site for Zn(2+). Glutamate 448 is an active-site residue. Zn(2+)-binding residues include histidine 451 and histidine 454.

Belongs to the peptidase M3 family. In terms of assembly, monomer. It depends on Zn(2+) as a cofactor.

The protein operates within mycotoxin biosynthesis. Oligopeptidase; part of the gene cluster that mediates the biosynthesis of the phomopsins, a group of hexapeptide mycotoxins which infects lupins and causes lupinosis disease in livestock. Within the pathway, phomG and phomG' are probably involved in the processing of the phomA and phomA' precursors. The pathway starts with the processing of the precursor phomA by several endopeptidases including kexin proteases as well as the cluster-specific S41 family peptidase phomP1 and the oligopeptidase phomG to produce 10 identical copies of the hexapeptide Tyr-Val-Ile-Pro-Ile-Asp. After being excised from the precursor peptide, the core peptides are cyclized and modified post-translationally by enzymes encoded within the gene cluster. The timing and order of proteolysis of the phomA precursor and PTMs are still unknown. Two tyrosinase-like enzymes, phomQ1 and phomQ2, catalyze the chlorination and hydroxylation of Tyr, respectively. PhomYb, is proposed to be involved in the construction of the macrocyclic structure. The other 4 ustYa family proteins may be involved in PTMs that generate the unique structure of phomopsin A. PhomYa is required for the hydroxylation of C-beta of Tyr. PhomYc, phomYd, and phomYe are responsible for the biosynthesis of 2,3-dehydroisoleucine (dIle), 2,3-dehydroaspartic acid (dAsp), and 3,4-dehydroproline (dPro), respectively. While dIle formation by phomYc is indispensable for the installation of dAsp by phomYd, the order of the other PTMs have not been elucidated yet. Most of the biosynthetic enzymes likely have broad substrate specificity, and thus, there might be a metabolic grid from a precursor to phomopsin A. The enzyme(s) responsible for the biosynthesis of 3,4-dehydrovaline (dVal) have also not been identified yet. Finally, phomM acts as an S-adenosylmethionine-dependent alpha-N-methyltransferase that catalyzes two successive N-methylation reactions, converting N-desmethyl-phomopsin A to phomopsin A and phomopsin A further to an N,N-dimethylated congener called phomopsin E. This is Oligopeptidase PhomG' from Diaporthe leptostromiformis (Lupinosis disease fungus).